Consider the following 440-residue polypeptide: Probable exopolygalacturonase C (440 aa).

Residues 1-19 form the signal peptide; sequence MSVFKASFLFLLSSSLVHG. Asparagine 82 and asparagine 99 each carry an N-linked (GlcNAc...) asparagine glycan. PbH1 repeat units follow at residues 215-236, 238-259, and 265-288; these read GTNI…AVGA, SHDT…SIGS, and TDFA…YAAR. Aspartate 229 serves as the catalytic Proton donor. Histidine 253 is a catalytic residue. Residues asparagine 269, asparagine 301, asparagine 311, and asparagine 334 are each glycosylated (N-linked (GlcNAc...) asparagine). Cysteine 387 and cysteine 393 are disulfide-bonded. 2 N-linked (GlcNAc...) asparagine glycosylation sites follow: asparagine 417 and asparagine 432.

Belongs to the glycosyl hydrolase 28 family.

It is found in the secreted. It catalyses the reaction [(1-&gt;4)-alpha-D-galacturonosyl](n) + H2O = alpha-D-galacturonate + [(1-&gt;4)-alpha-D-galacturonosyl](n-1). Its function is as follows. Specific in hydrolyzing the terminal glycosidic bond of polygalacturonic acid and oligogalacturonates. The sequence is that of Probable exopolygalacturonase C (pgxC) from Aspergillus niger (strain ATCC MYA-4892 / CBS 513.88 / FGSC A1513).